The following is a 501-amino-acid chain: Glycerol kinase (501 aa).

Position 11 (threonine 11) interacts with ADP. The ATP site is built by threonine 11, threonine 12, and serine 13. Sn-glycerol 3-phosphate is bound at residue threonine 11. Arginine 15 provides a ligand contact to ADP. 4 residues coordinate sn-glycerol 3-phosphate: arginine 81, glutamate 82, tyrosine 133, and aspartate 242. Glycerol contacts are provided by arginine 81, glutamate 82, tyrosine 133, aspartate 242, and glutamine 243. Threonine 264 and glycine 307 together coordinate ADP. The ATP site is built by threonine 264, glycine 307, glutamine 311, and glycine 409. Positions 409 and 413 each coordinate ADP.

It belongs to the FGGY kinase family.

It catalyses the reaction glycerol + ATP = sn-glycerol 3-phosphate + ADP + H(+). It functions in the pathway polyol metabolism; glycerol degradation via glycerol kinase pathway; sn-glycerol 3-phosphate from glycerol: step 1/1. Inhibited by fructose 1,6-bisphosphate (FBP). Its function is as follows. Key enzyme in the regulation of glycerol uptake and metabolism. Catalyzes the phosphorylation of glycerol to yield sn-glycerol 3-phosphate. This is Glycerol kinase from Borreliella burgdorferi (strain ATCC 35210 / DSM 4680 / CIP 102532 / B31) (Borrelia burgdorferi).